The following is a 301-amino-acid chain: Hydroxymycolate synthase MmaA4 (301 aa).

S-adenosyl-L-methionine contacts are provided by residues 42–43 (YS), 81–83 (GCG), 103–108 (TLSKNQ), 132–133 (WE), and I145. C278 is an active-site residue.

Belongs to the CFA/CMAS family. As to quaternary structure, monomer.

Its pathway is lipid metabolism; mycolic acid biosynthesis. Involved in the biosynthesis of hydroxymycolate, a common precursor of oxygenated mycolic acids (methoxymycolate and ketomycolate). Probably transfers a methyl group from the S-adenosylmethionine (SAM) cofactor and, subsequently or simultaneously, a water molecule onto the double bound of ethylene substrates, leading to the formation of the hydroxylated product at the distal position. This chain is Hydroxymycolate synthase MmaA4 (cmaA), found in Mycobacterium bovis (strain ATCC BAA-935 / AF2122/97).